The sequence spans 477 residues: Bifunctional protein HldE (477 aa).

Residues 1-318 (MKVTLPEFER…ENAVRGRADT (318 aa)) form a ribokinase region. Lysine 179 bears the N6-acetyllysine mark. Position 195-198 (195-198 (NLSE)) interacts with ATP. Residue aspartate 264 is part of the active site. Residues 344–477 (MTNGVFDILH…IKKIQQDKKG (134 aa)) form a cytidylyltransferase region.

It in the N-terminal section; belongs to the carbohydrate kinase PfkB family. The protein in the C-terminal section; belongs to the cytidylyltransferase family. Homodimer.

The enzyme catalyses D-glycero-beta-D-manno-heptose 7-phosphate + ATP = D-glycero-beta-D-manno-heptose 1,7-bisphosphate + ADP + H(+). It carries out the reaction D-glycero-beta-D-manno-heptose 1-phosphate + ATP + H(+) = ADP-D-glycero-beta-D-manno-heptose + diphosphate. It functions in the pathway nucleotide-sugar biosynthesis; ADP-L-glycero-beta-D-manno-heptose biosynthesis; ADP-L-glycero-beta-D-manno-heptose from D-glycero-beta-D-manno-heptose 7-phosphate: step 1/4. The protein operates within nucleotide-sugar biosynthesis; ADP-L-glycero-beta-D-manno-heptose biosynthesis; ADP-L-glycero-beta-D-manno-heptose from D-glycero-beta-D-manno-heptose 7-phosphate: step 3/4. In terms of biological role, catalyzes the phosphorylation of D-glycero-D-manno-heptose 7-phosphate at the C-1 position to selectively form D-glycero-beta-D-manno-heptose-1,7-bisphosphate. Its function is as follows. Catalyzes the ADP transfer from ATP to D-glycero-beta-D-manno-heptose 1-phosphate, yielding ADP-D-glycero-beta-D-manno-heptose. The sequence is that of Bifunctional protein HldE from Shigella sonnei (strain Ss046).